Here is a 399-residue protein sequence, read N- to C-terminus: Protein TWIN LOV 1 (399 aa).

The region spanning 26–97 (LWIKEALEEL…MEIREAIREE (72 aa)) is the PAS 1 domain. In terms of domain architecture, PAC 1 spans 98 to 153 (RSVQVSLLNYRKSGSPFWMLFHMCPVFGKDDGKVTNFVAVQVPISGREHHRKKLRN). In terms of domain architecture, PAS 2 spans 249 to 320 (SLVISLGRIK…EMKECILKGQ (72 aa)). S-4a-FMN cysteine is present on Cys-296. The 57-residue stretch at 320-376 (QSCTVQILNYSNRKDKSSFWNLLHISPVRNASGKTAYFVGVQVEASCRNTEIKELRP) folds into the PAC 2 domain.

As to quaternary structure, interacts with VTC2, VTC5 and BLH10. Post-translationally, FMN binds covalently to cysteine after exposure to blue light and is reversed in the dark.

The polypeptide is Protein TWIN LOV 1 (TLP1) (Arabidopsis thaliana (Mouse-ear cress)).